A 393-amino-acid polypeptide reads, in one-letter code: 1-deoxy-D-xylulose 5-phosphate reductoisomerase (393 aa).

NADPH is bound by residues Thr10, Gly11, Ser12, Ile13, Arg37, Gln38, and Asn124. Residue Lys125 coordinates 1-deoxy-D-xylulose 5-phosphate. Glu126 serves as a coordination point for NADPH. Asp150 contributes to the Mn(2+) binding site. The 1-deoxy-D-xylulose 5-phosphate site is built by Ser151, Glu152, Ser179, and His202. Glu152 serves as a coordination point for Mn(2+). Position 208 (Gly208) interacts with NADPH. The 1-deoxy-D-xylulose 5-phosphate site is built by Ser215, Asn220, Lys221, and Glu224. Glu224 serves as a coordination point for Mn(2+).

The protein belongs to the DXR family. Mg(2+) serves as cofactor. Mn(2+) is required as a cofactor.

The catalysed reaction is 2-C-methyl-D-erythritol 4-phosphate + NADP(+) = 1-deoxy-D-xylulose 5-phosphate + NADPH + H(+). It functions in the pathway isoprenoid biosynthesis; isopentenyl diphosphate biosynthesis via DXP pathway; isopentenyl diphosphate from 1-deoxy-D-xylulose 5-phosphate: step 1/6. Its function is as follows. Catalyzes the NADPH-dependent rearrangement and reduction of 1-deoxy-D-xylulose-5-phosphate (DXP) to 2-C-methyl-D-erythritol 4-phosphate (MEP). The polypeptide is 1-deoxy-D-xylulose 5-phosphate reductoisomerase (Cupriavidus taiwanensis (strain DSM 17343 / BCRC 17206 / CCUG 44338 / CIP 107171 / LMG 19424 / R1) (Ralstonia taiwanensis (strain LMG 19424))).